The following is a 211-amino-acid chain: UPF0056 membrane protein BUsg_257 (211 aa).

The next 6 membrane-spanning stretches (helical) occupy residues 14–34, 54–74, 76–96, 116–136, 144–164, and 185–205; these read FFVS…FTTM, AFII…AFGI, INSF…SMIS, VVPL…TIVW, SDFL…WLCF, and IMGL…IKSI.

The protein belongs to the UPF0056 (MarC) family.

Its subcellular location is the cell membrane. This is UPF0056 membrane protein BUsg_257 from Buchnera aphidicola subsp. Schizaphis graminum (strain Sg).